Here is a 728-residue protein sequence, read N- to C-terminus: Dehydrocurvularin biosynthesis regulator (728 aa).

Positions 28 to 58 (CWECKRRKMKCRFDPRIASACNGCRRRGSPC) form a DNA-binding region, zn(2)-C6 fungal-type. Disordered regions lie at residues 75 to 130 (GTTS…TSQR) and 606 to 626 (QHAT…NSDA). Positions 89–109 (RATTPSERTDQILTPVSTVRE) are enriched in polar residues.

The protein localises to the nucleus. Its function is as follows. Transcription factor involved in regulation of the dehydrocurvularin biosynthesis gene cluster. The chain is Dehydrocurvularin biosynthesis regulator from Aspergillus terreus.